The following is a 569-amino-acid chain: Proline--tRNA ligase (569 aa).

The protein belongs to the class-II aminoacyl-tRNA synthetase family. ProS type 1 subfamily. Homodimer.

The protein resides in the cytoplasm. The enzyme catalyses tRNA(Pro) + L-proline + ATP = L-prolyl-tRNA(Pro) + AMP + diphosphate. Catalyzes the attachment of proline to tRNA(Pro) in a two-step reaction: proline is first activated by ATP to form Pro-AMP and then transferred to the acceptor end of tRNA(Pro). As ProRS can inadvertently accommodate and process non-cognate amino acids such as alanine and cysteine, to avoid such errors it has two additional distinct editing activities against alanine. One activity is designated as 'pretransfer' editing and involves the tRNA(Pro)-independent hydrolysis of activated Ala-AMP. The other activity is designated 'posttransfer' editing and involves deacylation of mischarged Ala-tRNA(Pro). The misacylated Cys-tRNA(Pro) is not edited by ProRS. The polypeptide is Proline--tRNA ligase (Desulforamulus reducens (strain ATCC BAA-1160 / DSM 100696 / MI-1) (Desulfotomaculum reducens)).